The primary structure comprises 2039 residues: Methylcytosine dioxygenase TET1 (2039 aa).

Basic residues predominate over residues 1 to 19 (MSRSRPAKPSKSVKTKLQK). Disordered regions lie at residues 1–79 (MSRS…AGAA), 119–168 (VVTP…NGEQ), and 227–286 (DNEC…GFPD). Composition is skewed to basic and acidic residues over residues 53-65 (KRRDGKKETEDKT) and 138-149 (IQDEPGVKHSEN). Composition is skewed to polar residues over residues 150 to 168 (DSVPSQHATVSPGTENGEQ) and 241 to 265 (QRSTSEVTSQKNTSNQLADLSSQVE). The interval 512-657 (LDLTQGSQAA…NGPKSESMDC (146 aa)) is sufficient for binding to genomic CpG islands. Residues 567–608 (ERRKRKACGVCEPCQQKANCGECTYCKNRKNSHQICKKRKCE) form a CXXC-type zinc finger. Zn(2+) contacts are provided by Cys574, Cys577, Cys580, Cys586, Cys589, Cys592, Cys602, and Cys607. 8 disordered regions span residues 613 to 670 (KPEA…QRLD), 711 to 735 (CDANLTGVENPQPSEDDKQQTNPSP), 820 to 859 (GAEPTIFNNHPNTHSAGSRPHPPEKVPNKEPKDGSPVQPS), 882 to 906 (QLSEAPSESSSPSKPEKDEEAHQKT), 964 to 993 (QGYPSSPTAEKKGAAGGRAPFDGFENSHPL), 1050 to 1129 (VRNA…KKQE), 1209 to 1240 (VEPSDSLPTCQFKTESGGQTFAEPADNSQGQP), and 1322 to 1341 (KREAQTSSNGPLGPTTDSAQ). Positions 653–670 (ESMDCSRRGHGEEEQRLD) are enriched in basic and acidic residues. Polar residues predominate over residues 825–835 (IFNNHPNTHSA). Residues 840-852 (HPPEKVPNKEPKD) are compositionally biased toward basic and acidic residues. Phosphoserine is present on Ser854. Over residues 884–894 (SEAPSESSSPS) the composition is skewed to low complexity. Residues 895–904 (KPEKDEEAHQ) are compositionally biased toward basic and acidic residues. Residues 1053–1064 (AESTPESLVAKN) show a composition bias toward polar residues. Positions 1094–1116 (KPKKAQKKARATPHANKRKKKPP) are enriched in basic residues. Composition is skewed to polar residues over residues 1214–1227 (SLPTCQFKTESGGQ) and 1326–1341 (QTSSNGPLGPTTDSAQ). Zn(2+) contacts are provided by Cys1371, Cys1373, Cys1430, His1456, and Cys1458. Arg1499 is a 2-oxoglutarate binding site. 4 residues coordinate Zn(2+): Cys1509, Cys1511, Cys1527, and Cys1536. The interaction with DNA stretch occupies residues 1528–1541 (SWSMYFNGCKFGRS). Lys1537 participates in a covalent cross-link: Glycyl lysine isopeptide (Lys-Gly) (interchain with G-Cter in ubiquitin). Residue Cys1628 participates in Zn(2+) binding. 2-oxoglutarate is bound at residue Cys1644. His1650 contacts Zn(2+). Positions 1652 and 1654 each coordinate Fe cation. Residue Asn1657 participates in substrate binding. His1685 contacts 2-oxoglutarate. The segment covering 1734-1743 (GKRAKMKQNH) has biased composition (basic residues). Disordered regions lie at residues 1734–1760 (GKRAKMKQNHNKSGSHNTKSFSSASST) and 1830–1901 (AAHP…LPQL). Positions 1748–1760 (SHNTKSFSSASST) are enriched in low complexity. Over residues 1850 to 1875 (TSPSEQLTSNQSNQQLPLLSNSQKLA) the composition is skewed to polar residues. The segment covering 1880 to 1895 (EDERHPEADEPQHPED) has biased composition (basic and acidic residues). His1939 contacts Fe cation. Position 1954–1956 (1954–1956 (RVS)) interacts with 2-oxoglutarate. Residue 1960–1962 (YQH) coordinates substrate. His1970 contacts Zn(2+).

It belongs to the TET family. In terms of assembly, interacts with SIN3A; recruits the transcriptional co-repressor SIN3A to gene promoters. Interacts with HCFC1. Interacts (via C-terminus) with OGT. Found in a complex composed of at least SINHCAF, SIN3A, HDAC1, SAP30, RBBP4, OGT and TET1. Interacts with QSER1. Interacts with NONO (via DNA-binding domain); this interaction recruits TET1 to genomic loci. Interacts with FOXA2; this interaction may recruit TET1 to specific enhancers to preserve their unmethylated status and hence allowing gene expression. Interacts with RNF2. Directly interacts (via C-terminus) with the DCAF1 component of the CRL4(VprBP) E3 ubiquitin-protein ligase complex. As to quaternary structure, interacts with UHRF1; this interaction induces the recruitment of TET1 to replicating heterochromatin. Interacts with DCAF1. Fe(2+) serves as cofactor. Zn(2+) is required as a cofactor. Glycosylated. Interaction with OGT leads to GlcNAcylation. In terms of processing, monoubiquitinated by the DCX (DDB1-CUL4-X-box) E3 ubiquitin-protein ligase complex called CRL4(VprBP) or CUL4A-RBX1-DDB1-DCAF1/VPRBP complex. Post-translationally, monoubiquitinated by the DCX (DDB1-CUL4-X-box) E3 ubiquitin-protein ligase complex called CRL4(VprBP) or CUL4A-RBX1-DDB1-DCAF1/VPRBP complex; this modification promotes binding to DNA. Expressed in germinal vesicle (GV) stage and MII-stage oocytes and in early embryos. Also detected somatic tissues, including brain, liver and kidney, but at very low levels. As to expression, predominantly expressed in early embryos. Also expressed in embryonic stem cells and in primordial germ cells. Expressed in adult tissues, including brain cortex, cerebellum, heart, kidney, liver, muscle and spleen, although at much lower levels than isoform 2. In the brain, expressed at higher levels in glial cells than in neurons. Expressed in placenta. Expressed in the pituitary, most probably in thyrotropes. In terms of tissue distribution, preferentially expressed in differentiated cells, including in cerebral cortex, cerebellum and thymus. Also expressed in heart, kidney, liver, muscle and spleen at much higher levels than isoform 1. In the brain, expressed at higher levels in neurons than in glial cells. Expressed in the olfactory bulb and in the mammary gland.

The protein localises to the nucleus. It is found in the chromosome. It catalyses the reaction a 5-methyl-2'-deoxycytidine in DNA + 2-oxoglutarate + O2 = a 5-hydroxymethyl-2'-deoxycytidine in DNA + succinate + CO2. The catalysed reaction is a 5-hydroxymethyl-2'-deoxycytidine in DNA + 2-oxoglutarate + O2 = a 5-formyl-2'-deoxycytidine in DNA + succinate + CO2 + H2O. It carries out the reaction a 5-formyl-2'-deoxycytidine in DNA + 2-oxoglutarate + O2 = a 5-carboxyl-2'-deoxycytidine in DNA + succinate + CO2 + H(+). Functionally, dioxygenase that plays a key role in active DNA demethylation, by catalyzing the sequential oxidation of the modified genomic base 5-methylcytosine (5mC) into 5-hydroxymethylcytosine (5hmC), 5-formylcytosine (5fC), and 5-carboxylcytosine (5caC). In addition to its role in DNA demethylation, plays a more general role in chromatin regulation by recruiting histone modifying protein complexes to alter histone marks and chromatin accessibility, leading to both activation and repression of gene expression. Plays therefore a role in many biological processes, including stem cell maintenance, T- and B-cell development, inflammation regulation, iron homeostasis, neural activity or DNA repair. Involved in the balance between pluripotency and lineage commitment of cells it plays a role in embryonic stem cells maintenance and inner cell mass cell specification. Together with QSER1, plays an essential role in the protection and maintenance of transcriptional and developmental programs to inhibit the binding of DNMT3A/3B and therefore de novo methylation. May play a role in the pancreatic beta-cell specification during development. In this context, may function as an upstream epigenetic regulator of PAX4 presumably through direct recruitment by FOXA2 to a PAX4 enhancer to preserve its unmethylated status, thereby potentiating PAX4 expression to adopt beta-cell fate during endocrine lineage commitment. Under DNA hypomethylation conditions, such as in female meiotic germ cells, may induce epigenetic reprogramming of pericentromeric heterochromatin (PCH), the constitutive heterochromatin of pericentromeric regions. PCH forms chromocenters in the interphase nucleus and chromocenters cluster at the prophase of meiosis. In this context, may also be essential for chromocenter clustering in a catalytic activity-independent manner, possibly through the recruitment polycomb repressive complex 1 (PRC1) to the chromocenters. During embryonic development, may be required for normal meiotic progression in oocytes and meiotic gene activation. Binds preferentially to DNA containing cytidine-phosphate-guanosine (CpG) dinucleotides over CpH (H=A, T, and C), hemimethylated-CpG and hemimethylated-hydroxymethyl-CpG. In terms of biological role, dioxygenase that plays a key role in active DNA demethylation. Binds to promoters, particularly to those with high CG content. In hippocampal neurons, isoform 1 regulates the expression of a unique subset of genes compared to isoform 2, although some overlap between both isoforms, hence differentially regulates excitatory synaptic transmission. In hippocampal neuron cell cultures, isoform 1 controls both miniature excitatory postsynaptic current amplitude and frequency. Isoform 1 may regulate genes involved in hippocampal-dependent memory, leading to positive regulation of memory, contrary to isoform 2 that may decrease memory. Dioxygenase that plays a key role in active DNA demethylation. As isoform 1, binds to promoters, particularly to those with high CG content, however displays reduced global chromatin affinity compared with isoform 1, leading to decreased global DNA demethylation compared with isoform 1. Contrary to isoform 1, isoform 2 localizes during S phase to sites of ongoing DNA replication in heterochromatin, causing a significant de novo 5hmC formation, globally, and more so in heterochromatin, including LINE 1 interspersed DNA repeats leading to their activation. In hippocampal neurons, isoform 2 regulates the expression of a unique subset of genes compared with isoform 1, although some overlap between both isoforms, hence differentially regulating excitatory synaptic transmission. In hippocampal neuron cell cultures, isoform 2 controls miniature excitatory postsynaptic current frequency, but not amplitude. Isoform 2 may regulate genes involved in hippocampal-dependent memory, leading to negative regulation of memory, contrary to isoform 1 that may improve memory. In immature and partially differentiated gonadotrope cells, represses luteinizing hormone gene LHB expression directly and does not catalyze 5hmC at the gene promoter. The sequence is that of Methylcytosine dioxygenase TET1 (Tet1) from Mus musculus (Mouse).